A 184-amino-acid chain; its full sequence is Ribosome-recycling factor (184 aa).

It belongs to the RRF family.

It localises to the cytoplasm. Its function is as follows. Responsible for the release of ribosomes from messenger RNA at the termination of protein biosynthesis. May increase the efficiency of translation by recycling ribosomes from one round of translation to another. In Onion yellows phytoplasma (strain OY-M), this protein is Ribosome-recycling factor.